The sequence spans 97 residues: Putative pterin-4-alpha-carbinolamine dehydratase (97 aa).

It belongs to the pterin-4-alpha-carbinolamine dehydratase family.

It catalyses the reaction (4aS,6R)-4a-hydroxy-L-erythro-5,6,7,8-tetrahydrobiopterin = (6R)-L-erythro-6,7-dihydrobiopterin + H2O. This is Putative pterin-4-alpha-carbinolamine dehydratase from Rhizorhabdus wittichii (strain DSM 6014 / CCUG 31198 / JCM 15750 / NBRC 105917 / EY 4224 / RW1) (Sphingomonas wittichii).